A 526-amino-acid chain; its full sequence is Exodeoxyribonuclease 7 large subunit (526 aa).

The interval 497 to 526 (AMTTEGGTPPGGAKKRSTKPAEPTKQGSLF) is disordered.

It belongs to the XseA family. Heterooligomer composed of large and small subunits.

The protein localises to the cytoplasm. The catalysed reaction is Exonucleolytic cleavage in either 5'- to 3'- or 3'- to 5'-direction to yield nucleoside 5'-phosphates.. Its function is as follows. Bidirectionally degrades single-stranded DNA into large acid-insoluble oligonucleotides, which are then degraded further into small acid-soluble oligonucleotides. This Rhizobium etli (strain ATCC 51251 / DSM 11541 / JCM 21823 / NBRC 15573 / CFN 42) protein is Exodeoxyribonuclease 7 large subunit.